A 100-amino-acid chain; its full sequence is Aspartyl/glutamyl-tRNA(Asn/Gln) amidotransferase subunit C (100 aa).

Belongs to the GatC family. Heterotrimer of A, B and C subunits.

It catalyses the reaction L-glutamyl-tRNA(Gln) + L-glutamine + ATP + H2O = L-glutaminyl-tRNA(Gln) + L-glutamate + ADP + phosphate + H(+). The enzyme catalyses L-aspartyl-tRNA(Asn) + L-glutamine + ATP + H2O = L-asparaginyl-tRNA(Asn) + L-glutamate + ADP + phosphate + 2 H(+). Allows the formation of correctly charged Asn-tRNA(Asn) or Gln-tRNA(Gln) through the transamidation of misacylated Asp-tRNA(Asn) or Glu-tRNA(Gln) in organisms which lack either or both of asparaginyl-tRNA or glutaminyl-tRNA synthetases. The reaction takes place in the presence of glutamine and ATP through an activated phospho-Asp-tRNA(Asn) or phospho-Glu-tRNA(Gln). The sequence is that of Aspartyl/glutamyl-tRNA(Asn/Gln) amidotransferase subunit C from Novosphingobium aromaticivorans (strain ATCC 700278 / DSM 12444 / CCUG 56034 / CIP 105152 / NBRC 16084 / F199).